A 337-amino-acid chain; its full sequence is Structural protein VP9 (337 aa).

The protein resides in the virion. Its subcellular location is the host cytoplasm. In Colorado tick fever virus (strain USA/Florio N-7180) (CTFV), this protein is Structural protein VP9.